The sequence spans 36 residues: Mating hormone A-factor 1 (36 aa).

Residues 1-21 (MQPSTATAAPKEKTSSEKKDN) constitute a propeptide that is removed on maturation. Cysteine 33 is modified (cysteine methyl ester). Residue cysteine 33 is the site of S-farnesyl cysteine attachment. The propeptide at 34–36 (VIA) is removed in mature form.

The protein resides in the cell membrane. Functionally, the active factor is excreted into the culture medium by haploid cells of the A mating type and acts on cells of the opposite mating type (type alpha). It mediates the conjugation process between the two types by inhibiting the initiation of DNA synthesis in type alpha cells and synchronizing them with type A. The chain is Mating hormone A-factor 1 (MFA1) from Saccharomyces cerevisiae (strain ATCC 204508 / S288c) (Baker's yeast).